The chain runs to 604 residues: Protein hemingway (604 aa).

Disordered regions lie at residues 1–70 (MSGA…GNPH), 103–309 (NQLS…PTSQ), 359–387 (SDRR…GGGI), and 544–585 (TIKA…IDLD). Acidic residues-rich tracts occupy residues 8–38 (SDEE…YIEP), 135–183 (EDEA…DDAQ), 194–214 (DDSD…EDEP), and 288–300 (EEPE…EENQ). Low complexity predominate over residues 368 to 379 (EMSSMTETTMTS).

It belongs to the CFAP97 family. Detected in ciliated sensory neurons at all stages of development, and in adult testis.

It is found in the cell projection. It localises to the cilium. The protein localises to the perikaryon. The protein resides in the cytoplasm. Involved in assembly and/or maintenance of motile cilia. Required during spermatogenesis for axoneme elongation. Necessary for optimal function of the chordotonal (hearing) organs. This is Protein hemingway from Drosophila melanogaster (Fruit fly).